Here is a 273-residue protein sequence, read N- to C-terminus: Anthranilate synthase beta subunit 2, chloroplastic (273 aa).

Residues 1–47 constitute a chloroplast transit peptide; sequence MATAARLLPKIQSPASPAVAEARRRRPSSLRLGVTSGPARTLKQKLV. The interval 15–35 is disordered; the sequence is ASPAVAEARRRRPSSLRLGVT. Positions 70-269 constitute a Glutamine amidotransferase type-1 domain; that stretch reads PIIVIDNYDS…IKIIEGYEAL (200 aa). 121-123 is an L-glutamine binding site; sequence GPG. C148 (nucleophile) is an active-site residue. L-glutamine contacts are provided by residues Q152 and 202–203; that span reads SL. Catalysis depends on residues H243 and E245.

Heterotetramer consisting of two non-identical subunits: a beta subunit and a large alpha subunit. Expressed in roots and leaves.

Its subcellular location is the plastid. The protein localises to the chloroplast. The enzyme catalyses chorismate + L-glutamine = anthranilate + pyruvate + L-glutamate + H(+). It participates in amino-acid biosynthesis; L-tryptophan biosynthesis; L-tryptophan from chorismate: step 1/5. In terms of biological role, part of a heterotetrameric complex that catalyzes the two-step biosynthesis of anthranilate, an intermediate in the biosynthesis of L-tryptophan. In the first step, the glutamine-binding beta subunit of anthranilate synthase (AS) provides the glutamine amidotransferase activity which generates ammonia as a substrate that, along with chorismate, is used in the second step, catalyzed by the large alpha subunit of AS to produce anthranilate. This is Anthranilate synthase beta subunit 2, chloroplastic from Oryza sativa subsp. japonica (Rice).